Consider the following 443-residue polypeptide: Deoxyguanosinetriphosphate triphosphohydrolase-like protein (443 aa).

One can recognise an HD domain in the interval 66-259; it reads RLTHSLEAAQ…MELADDIAYG (194 aa).

This sequence belongs to the dGTPase family. Type 2 subfamily.

The chain is Deoxyguanosinetriphosphate triphosphohydrolase-like protein from Vibrio vulnificus (strain CMCP6).